The chain runs to 149 residues: Transcriptional regulator MraZ (149 aa).

2 consecutive SpoVT-AbrB domains span residues lysine 7–histidine 54 and alanine 83–asparagine 126.

Belongs to the MraZ family. In terms of assembly, forms oligomers.

It localises to the cytoplasm. The protein resides in the nucleoid. The polypeptide is Transcriptional regulator MraZ (Rickettsia typhi (strain ATCC VR-144 / Wilmington)).